The sequence spans 301 residues: Acetylglutamate kinase (301 aa).

Substrate-binding positions include 68 to 69 (GG), R90, and N195.

The protein belongs to the acetylglutamate kinase family. ArgB subfamily.

Its subcellular location is the cytoplasm. The enzyme catalyses N-acetyl-L-glutamate + ATP = N-acetyl-L-glutamyl 5-phosphate + ADP. The protein operates within amino-acid biosynthesis; L-arginine biosynthesis; N(2)-acetyl-L-ornithine from L-glutamate: step 2/4. Its function is as follows. Catalyzes the ATP-dependent phosphorylation of N-acetyl-L-glutamate. This chain is Acetylglutamate kinase, found in Pseudomonas savastanoi pv. phaseolicola (strain 1448A / Race 6) (Pseudomonas syringae pv. phaseolicola (strain 1448A / Race 6)).